A 1016-amino-acid chain; its full sequence is Rho family-interacting cell polarization regulator 2 (1016 aa).

Phosphoserine is present on residues serine 21 and serine 37. The segment at 44–73 is disordered; that stretch reads AVKKPQAKLKKMHNLGHKNSSPPKEPQPKR. The span at 48–59 shows a compositional bias: basic residues; it reads PQAKLKKMHNLG. Residues 55–113 form an involved in cell filopodia formation region; that stretch reads MHNLGHKNSSPPKEPQPKRVEEVYRALKNGLDEYLEVHQTELDKLTTQLKDMRRNSRLG. The stretch at 85–112 forms a coiled coil; the sequence is LDEYLEVHQTELDKLTTQLKDMRRNSRL. Serine 341 is subject to Phosphoserine. Residues 414–428 are compositionally biased toward polar residues; it reads TSTELPPGSQSSQNE. The interval 414-469 is disordered; the sequence is TSTELPPGSQSSQNEGLKDSSSASCSSSSREGSEPRPHPEGETQGLGKPEGCPVAT. Residues 433–442 are compositionally biased toward low complexity; sequence SSSASCSSSS. Positions 444 to 454 are enriched in basic and acidic residues; sequence EGSEPRPHPEG. A phosphoserine mark is found at serine 520 and serine 532. The disordered stretch occupies residues 636-656; it reads DSVFSDTETEKNSYRSVHPEA. Over residues 643–656 the composition is skewed to basic and acidic residues; it reads ETEKNSYRSVHPEA.

Belongs to the RIPOR family. Homooligomer; homooligomerization is regulated by RHOC and leads to the formation of concatemers through the association of N- and C-termini. Interacts (phosphorylated form) with 14-3-3 proteins; these interactions occur during myogenic cell differentiation and also induces T cell proliferation arrest. Interacts (phosphorylated form) with HDAC6; this interaction occurs during early myogenic differentiation, prevents HDAC6 to deacetylate tubulin and also induces T cell proliferation arrest. Interacts with DYSF; this interaction occurs during early myogenic differentiation. Interacts with MYOF. Interacts (via active GTP- or inactive GDP-bound forms) with RHOA; this interaction is direct, blocks the loading of GTP to RHOA and decreases upon chemokine CCL19 stimulation in primary T lymphocytes. Interacts with RHOC. Interacts (via phosphorylated form) with YWHAB; this interaction occurs in a chemokine-dependent manner and does not compete for binding of RIPOR2 with RHOA nor blocks inhibition of RIPOR2-mediated RHOA activity. Interacts with YWHAE. Interacts with YWHAQ. Phosphorylated. Chemokine-induced phosphorylation in neutrophils occurs in a PKC- and AKT-dependent manner, resulting in RIPOR2 interaction with YWHAB and stabilization. Phosphorylated by PKCA, AKT1 and MAPKAPK1A; in vitro.

It localises to the cytoplasm. The protein localises to the cytoskeleton. Its subcellular location is the cell projection. It is found in the filopodium. The protein resides in the apical cell membrane. It localises to the stereocilium. The protein localises to the stereocilium membrane. In terms of biological role, acts as an inhibitor of the small GTPase RHOA and plays several roles in the regulation of myoblast and hair cell differentiation, lymphocyte T proliferation and neutrophil polarization. Plays a role in fetal mononuclear myoblast differentiation by promoting filopodia and myotube formation. Maintains naive T lymphocytes in a quiescent state and prevents chemokine-induced T lymphocyte responses, such as cell adhesion, polarization and migration. Involved also in the regulation of neutrophil polarization, chemotaxis and adhesion. Required for normal development of inner and outer hair cell stereocilia within the cochlea of the inner ear. Plays a role for maintaining the structural organization of the basal domain of stereocilia. Involved in mechanosensory hair cell function. Required for normal hearing. This is Rho family-interacting cell polarization regulator 2 from Bos taurus (Bovine).